The chain runs to 265 residues: Phosphonates import ATP-binding protein PhnC 1 (265 aa).

The ABC transporter domain occupies 3–247 (LRLSAIELRH…HLDTLYANEQ (245 aa)). Residue 36–43 (GPSGAGKT) coordinates ATP.

This sequence belongs to the ABC transporter superfamily. Phosphonates importer (TC 3.A.1.9.1) family. In terms of assembly, the complex is composed of two ATP-binding proteins (PhnC), two transmembrane proteins (PhnE) and a solute-binding protein (PhnD).

It localises to the cell inner membrane. The enzyme catalyses phosphonate(out) + ATP + H2O = phosphonate(in) + ADP + phosphate + H(+). Part of the ABC transporter complex PhnCDE involved in phosphonates import. Responsible for energy coupling to the transport system. The polypeptide is Phosphonates import ATP-binding protein PhnC 1 (Pseudomonas syringae pv. syringae (strain B728a)).